A 563-amino-acid chain; its full sequence is Arginine--tRNA ligase (563 aa).

Residues 121–131 (PNIAKPFSIGH) carry the 'HIGH' region motif.

This sequence belongs to the class-I aminoacyl-tRNA synthetase family. In terms of assembly, monomer.

Its subcellular location is the cytoplasm. The catalysed reaction is tRNA(Arg) + L-arginine + ATP = L-arginyl-tRNA(Arg) + AMP + diphosphate. This Streptococcus pneumoniae (strain P1031) protein is Arginine--tRNA ligase.